Reading from the N-terminus, the 258-residue chain is UBX domain-containing protein 2A (258 aa).

Positions 1 to 14 are enriched in basic and acidic residues; the sequence is MKEVDNLDSIKEEW. The tract at residues 1-30 is disordered; the sequence is MKEVDNLDSIKEEWACETGPPDSQPLNDNQ. A required for interaction with CHRNA3 region spans residues 1–152; sequence MKEVDNLDSI…SATPRIVSKA (152 aa). Residues 1–165 are required for inhibition of CHRNA3 ubiquitination and translocation of CHRNA3 to the plasma membrane resulting in an increase in acetylcholine-gated nicotinic acetylcholine receptor currents; the sequence is MKEVDNLDSI…EVDNKSTLSA (165 aa). Residues 61–125 form the SEP domain; sequence QVDVNIKLWK…VEDKKNEVCM (65 aa). Positions 168–258 are required for interaction with VCP; that stretch reads LNNLEPITRI…QKTAEPFRKL (91 aa). One can recognise a UBX domain in the interval 170–247; that stretch reads NLEPITRIQI…DLKNAVIIQR (78 aa).

As to quaternary structure, part of a complex composed of STUB1/CHIP, VCP/p97, CHRNA3, and UBXN2A that modulates the ubiquitination and endoplasmic reticulum-associated degradation (ERAD) of CHRNA3. Within the complex UBXN2A acts as a scaffold protein required for the interaction of CHRNA3 with VCP/p97, this interaction also inhibits CHRNA3 ubiquitination by STUB1/CHIP and subsequently ERAD. Interacts (via SEP domain) with CHRNA3 and interacts (via UBX domain) with VCP/P97; these interactions are required for the interaction of CHRNA3 with the STUB1-VCP-UBXN2A complex. Interacts with HSPA9/MOT-2 (via SBD domain); the interaction inhibits HSPA9/MOT-2 interaction with and degradation of p53, thereby promotes p53 translocation to the nucleus. Interacts with RICTOR. Post-translationally, ubiquitinated. Expressed in the prefrontal cortex (at protein level). Expressed in the habenula and hippocampus (at protein level). Expressed in peripheral ganglia.

It is found in the golgi apparatus. The protein resides in the endoplasmic reticulum. Its subcellular location is the perikaryon. The protein localises to the cell projection. It localises to the dendrite. It is found in the nucleus. The protein resides in the cytoplasm. Its function is as follows. Acts to repress the ubiquitination and subsequent endoplasmic reticulum-associated degradation of CHRNA3 by the STUB1-VCP-UBXN2A complex in cortical neurons. Also acts to promote the translocation of CHRNA3 to the plasma membrane and subsequently increases plasma membrane acetylcholine-gated ion-channel activation. Plays a role in the inhibition of STUB1-mediated TP53 degradation, via its interaction with HSPA9 which acts to inhibit TP53 binding to HSPA9. Positively mediates the ubiquitination and proteosomal degradation of RICTOR, may thereby act as a negative regulator of the mTORC2 pathway. This chain is UBX domain-containing protein 2A, found in Mus musculus (Mouse).